Here is a 286-residue protein sequence, read N- to C-terminus: Probable endonuclease 4 (286 aa).

Zn(2+) is bound by residues histidine 67, histidine 107, glutamate 146, aspartate 180, histidine 183, histidine 217, aspartate 230, histidine 232, and glutamate 262.

It belongs to the AP endonuclease 2 family. Zn(2+) is required as a cofactor.

It carries out the reaction Endonucleolytic cleavage to 5'-phosphooligonucleotide end-products.. Its function is as follows. Endonuclease IV plays a role in DNA repair. It cleaves phosphodiester bonds at apurinic or apyrimidinic (AP) sites, generating a 3'-hydroxyl group and a 5'-terminal sugar phosphate. The sequence is that of Probable endonuclease 4 from Methanosphaerula palustris (strain ATCC BAA-1556 / DSM 19958 / E1-9c).